A 1104-amino-acid polypeptide reads, in one-letter code: tRNA ligase 1 (1104 aa).

The active-site N6-AMP-lysine intermediate is the K152.

The protein belongs to the TRL1 family. Mg(2+) serves as cofactor. As to expression, mainly expressed in proliferating cells and tissues such as root meristems, the vasculature of developing plantlets, flowers and elongating tissue.

The protein localises to the nucleus. It is found in the cytoplasm. The catalysed reaction is ATP + (ribonucleotide)n-3'-hydroxyl + 5'-phospho-(ribonucleotide)m = (ribonucleotide)n+m + AMP + diphosphate.. With respect to regulation, requires the presence of NTP, preferentially ATP rather than dATP, UTP, CTP and GTP, respectively, to mediate ribonucleotide 5'-phosphorylation. Essential component of stress-response pathways entailing repair of RNA breaks with 2',3'-cyclic phosphate and 5'-OH ends. Tri-functional enzyme that repairs RNA breaks with 2',3'-cyclic-PO(4) and 5'-OH ends. The ligation activity requires three sequential enzymatic activities: opening of the 2'3'-cyclic phosphodiester bond of the 5' half-tRNA leaving a 2'-phosphomonoester (CPDase activity), phosphorylation of the 5' terminus of the 3' half-tRNA in the presence of ATP (kinase activity) and ligation of the two tRNA halves in an ATP-dependent reaction (ligase activity). Deficient in transferring AMP to pRNA(OH) to form AppRNA(OH) but proficient at sealing pre-adenylylated AppRNA(OH). CPDase and kinase reactions are almost insensitive to RNA length, whereas the ligase activity decreases with shorter RNA size. Can also splice DNA ended by a single 3'-terminal ribonucleoside 2',3'-cyclic-PO(4). Binds to mRNA, mature and immature. Exhibits tRNA ligase activity in vitro. Required for the splicing of precursor tRNA molecules containing introns. Can circularize an intron cleaved from a pre-tRNA by splicing endonuclease in vitro. Seems not involved in unfolded protein response (UPR) in the endoplasmic reticulum. Involved in auxin signaling and polar transport during organ morphogenesis. The protein is tRNA ligase 1 of Arabidopsis thaliana (Mouse-ear cress).